The following is a 127-amino-acid chain: Large ribosomal subunit protein bL12 (127 aa).

Belongs to the bacterial ribosomal protein bL12 family. As to quaternary structure, homodimer. Part of the ribosomal stalk of the 50S ribosomal subunit. Forms a multimeric L10(L12)X complex, where L10 forms an elongated spine to which 2 to 4 L12 dimers bind in a sequential fashion. Binds GTP-bound translation factors.

In terms of biological role, forms part of the ribosomal stalk which helps the ribosome interact with GTP-bound translation factors. Is thus essential for accurate translation. This chain is Large ribosomal subunit protein bL12, found in Symbiobacterium thermophilum (strain DSM 24528 / JCM 14929 / IAM 14863 / T).